A 437-amino-acid chain; its full sequence is Transmembrane protease serine 4 (437 aa).

Residues 1-32 (MLQDPDSDQPLNSLDVKPLRKPRIPMETFRKV) lie on the Cytoplasmic side of the membrane. The chain crosses the membrane as a helical; Signal-anchor for type II membrane protein span at residues 33–53 (GIPIIIALLSLASIIIVVVLI). Topologically, residues 54–437 (KVILDKYYFL…WIYNVWKAEL (384 aa)) are extracellular. Positions 61-93 (YFLCGQPLHFIPRKQLCDGELDCPLGEDEEHCV) constitute an LDL-receptor class A domain. 8 cysteine pairs are disulfide-bonded: Cys-64-Cys-83, Cys-77-Cys-92, Cys-127-Cys-183, Cys-140-Cys-193, Cys-196-Cys-310, Cys-230-Cys-246, Cys-356-Cys-372, and Cys-383-Cys-410. In terms of domain architecture, SRCR spans 94-204 (KSFPEGPAVA…ACGKSLKTPR (111 aa)). 2 N-linked (GlcNAc...) asparagine glycosylation sites follow: Asn-130 and Asn-178. Residues 205–434 (VVGVEEASVD…YLNWIYNVWK (230 aa)) enclose the Peptidase S1 domain. Active-site charge relay system residues include His-245 and Asp-290. The Charge relay system role is filled by Ser-387.

This sequence belongs to the peptidase S1 family. Proteolytically processed; probably by an autocatalytic mechanism. High levels in pancreatic, gastric, colorectal and ampullary cancer. Very weak expression in normal gastrointestinal and urogenital tract. Coexpressed with ACE2 within mature enterocytes.

It is found in the cell membrane. It localises to the secreted. In terms of biological role, plasma membrane-anchored serine protease that directly induces processing of pro-uPA/PLAU into the active form through proteolytic activity. Seems to be capable of activating ENaC. (Microbial infection) In gut epithelial cells, facilitates human coronavirus SARS-CoV-2 infection through, at least, the cleavage of coronavirus spike glycoproteins which activates the glycoprotein for host cell entry. The chain is Transmembrane protease serine 4 from Homo sapiens (Human).